We begin with the raw amino-acid sequence, 167 residues long: uncharacterized protein (167 aa).

Residues 70 to 118 are a coiled coil; it reads KIVELRKAMESIITELAYIKGELKGLQEKGESKVERKEIIEEKIQKAMV. Over residues 128–155 the composition is skewed to basic and acidic residues; the sequence is EKEERKPAKESKRREHDVIIPEGKKEER. Residues 128–167 form a disordered region; sequence EKEERKPAKESKRREHDVIIPEGKKEERTDDGEDGLIVCD.

This is an uncharacterized protein from Archaeoglobus fulgidus (strain ATCC 49558 / DSM 4304 / JCM 9628 / NBRC 100126 / VC-16).